Here is a 579-residue protein sequence, read N- to C-terminus: uncharacterized protein (579 aa).

Helical transmembrane passes span 20–40, 54–74, 86–106, 142–162, 174–194, 204–224, 234–254, 279–299, 310–330, 335–355, 366–386, and 467–487; these read ALWAMMVGFFMIMLDSTVVAI, ATVVWVTSAYLLAYAVPMLVA, LYLIGLGVFTVASLGCGLSSG, GVALGAWGTVASVASLVGPLA, WIFFVNVPVGVIGLILAAYLI, FDWFGVGLSGAGMFLIVFGLQ, WIWAVIVGGIGFMSLFVYWQA, IAIIAFAGTGMMLPVTFYAQA, VLFAPTAIVGGVLAPFVGMII, PLCVLGFGFSVLAIAMTWLLC, LVLPFIALGVAGAFVWSPLTV, and MLLPAFVALFGIVAALFLVDF. The disordered stretch occupies residues 516–579; it reads REPEEDCDTQ…DTESTAPSAL (64 aa). The segment covering 526 to 540 has biased composition (low complexity); that stretch reads PLRASRPAAAAASRS. Residues 570 to 579 are compositionally biased toward polar residues; that stretch reads DTESTAPSAL.

Belongs to the major facilitator superfamily. EmrB family.

The protein resides in the cell membrane. This is an uncharacterized protein from Mycobacterium tuberculosis (strain ATCC 25618 / H37Rv).